A 487-amino-acid chain; its full sequence is Lysophospholipid acyltransferase 5 (487 aa).

Ala2 carries the N-acetylalanine modification. The next 6 membrane-spanning stretches (helical) occupy residues 44-64 (LIFS…YLFY), 67-87 (SYLI…FNFG), 111-131 (ITAV…GYYY), 178-198 (ILGV…GAFL), 236-256 (LGLV…EDYL), and 285-305 (VTCW…FNGF). A glycan (N-linked (GlcNAc...) asparagine) is linked at Asn308. Residues Asn338 and His374 contribute to the active site. The next 3 helical transmembrane spans lie at 364 to 384 (GLSL…LICF), 422 to 442 (LVQQ…FCLF), and 453 to 473 (SIYF…PYVY). The Di-lysine motif signature appears at 484 to 487 (KKRE).

This sequence belongs to the membrane-bound acyltransferase family.

Its subcellular location is the endoplasmic reticulum membrane. The enzyme catalyses a 1-acyl-sn-glycero-3-phosphocholine + an acyl-CoA = a 1,2-diacyl-sn-glycero-3-phosphocholine + CoA. The catalysed reaction is a 1-acyl-sn-glycero-3-phosphoethanolamine + an acyl-CoA = a 1,2-diacyl-sn-glycero-3-phosphoethanolamine + CoA. It catalyses the reaction a 1-acyl-sn-glycero-3-phospho-L-serine + an acyl-CoA = a 1,2-diacyl-sn-glycero-3-phospho-L-serine + CoA. It carries out the reaction (9Z,12Z)-octadecadienoyl-CoA + a 1-acyl-sn-glycero-3-phosphocholine = 1-acyl-2-(9Z,12Z)-octadecadienoyl-sn-glycero-3-phosphocholine + CoA. The enzyme catalyses (5Z,8Z,11Z,14Z)-eicosatetraenoyl-CoA + a 1-acyl-sn-glycero-3-phosphocholine = 1-acyl-2-(5Z,8Z,11Z,14Z-eicosatetraenoyl)-sn-glycero-3-phosphocholine + CoA. The catalysed reaction is dodecanoyl-CoA + 1-hexadecanoyl-sn-glycero-3-phosphocholine = 1-hexadecanoyl-2-dodecanoyl-sn-glycero-3-phosphocholine + CoA. It catalyses the reaction octadecanoyl-CoA + 1-hexadecanoyl-sn-glycero-3-phosphocholine = 1-hexadecanoyl-2-octadecanoyl-sn-glycero-3-phosphocholine + CoA. It carries out the reaction 1-dodecanoyl-sn-glycero-3-phosphocholine + hexadecanoyl-CoA = 1-dodecanoyl-2-hexadecanoyl-sn-glycero-3-phosphocholine + CoA. The enzyme catalyses 1-tetradecanoyl-sn-glycero-3-phosphocholine + hexadecanoyl-CoA = 1-tetradecanoyl-2-hexadecanoyl-sn-glycero-3-phosphocholine + CoA. The catalysed reaction is 1-hexadecanoyl-sn-glycero-3-phosphocholine + hexadecanoyl-CoA = 1,2-dihexadecanoyl-sn-glycero-3-phosphocholine + CoA. It catalyses the reaction 1-octadecanoyl-sn-glycero-3-phosphocholine + hexadecanoyl-CoA = 1-octadecanoyl-2-hexadecanoyl-sn-glycero-3-phosphocholine + CoA. It carries out the reaction 1-(9Z-octadecenoyl)-sn-glycero-3-phosphocholine + hexadecanoyl-CoA = 1-(9Z-octadecenoyl)-2-hexadecanoyl-sn-glycero-3-phosphocholine + CoA. The enzyme catalyses (9Z)-hexadecenoyl-CoA + 1-hexadecanoyl-sn-glycero-3-phosphocholine = 1-hexadecanoyl-2-(9Z-hexadecenoyl)-sn-glycero-3-phosphocholine + CoA. The catalysed reaction is 1-hexadecanoyl-sn-glycero-3-phosphocholine + (9Z)-octadecenoyl-CoA = 1-hexadecanoyl-2-(9Z-octadecenoyl)-sn-glycero-3-phosphocholine + CoA. It catalyses the reaction (9Z,12Z)-octadecadienoyl-CoA + 1-hexadecanoyl-sn-glycero-3-phosphocholine = 1-hexadecanoyl-2-(9Z,12Z-octadecadienoyl)-sn-glycero-3-phosphocholine + CoA. It carries out the reaction 1-dodecanoyl-sn-glycero-3-phosphocholine + (5Z,8Z,11Z,14Z)-eicosatetraenoyl-CoA = 1-dodecanoyl-2-(5Z,8Z,11Z,14Z)-eicosatetraenoyl-sn-glycero-3-phosphocholine + CoA. The enzyme catalyses (5Z,8Z,11Z,14Z)-eicosatetraenoyl-CoA + 1-hexadecanoyl-sn-glycero-3-phosphocholine = 1-hexadecanoyl-2-(5Z,8Z,11Z,14Z-eicosatetraenoyl)-sn-glycero-3-phosphocholine + CoA. The catalysed reaction is 1-octadecanoyl-sn-glycero-3-phosphocholine + (5Z,8Z,11Z,14Z)-eicosatetraenoyl-CoA = 1-octadecanoyl-2-(5Z,8Z,11Z,14Z-eicosatetraenoyl)-sn-glycero-3-phosphocholine + CoA. It catalyses the reaction 1-eicosanoyl-sn-glycero-3-phosphocholine + (5Z,8Z,11Z,14Z)-eicosatetraenoyl-CoA = 1-eicosanoyl-2-(5Z,8Z,11Z,14Z)-eicosatetraenoyl-sn-glycero-3-phosphocholine + CoA. It carries out the reaction 1-(9Z-octadecenoyl)-sn-glycero-3-phosphocholine + (9Z)-octadecenoyl-CoA = 1,2-di-(9Z-octadecenoyl)-sn-glycero-3-phosphocholine + CoA. The enzyme catalyses 1-(9Z-octadecenoyl)-sn-glycero-3-phosphocholine + (9Z,12Z)-octadecadienoyl-CoA = 1-(9Z)-octadecenoyl-2-(9Z,12Z)-octadecadienoyl-sn-glycero-3-phosphocholine + CoA. The catalysed reaction is 1-(9Z-octadecenoyl)-sn-glycero-3-phosphocholine + (5Z,8Z,11Z,14Z)-eicosatetraenoyl-CoA = 1-(9Z)-octadecenoyl-2-(5Z,8Z,11Z,14Z)-icosatetraenoyl-sn-glycero-3-phosphocholine + CoA. It catalyses the reaction a 1-acyl-sn-glycero-3-phosphoethanolamine + (9Z,12Z)-octadecadienoyl-CoA = 1-acyl-2-(9Z,12Z)-octadecadienoyl-sn-glycero-3-phosphoethanolamine + CoA. It carries out the reaction 1-(9Z-octadecenoyl)-sn-glycero-3-phosphoethanolamine + (9Z,12Z)-octadecadienoyl-CoA = 1-(9Z)-octadecenoyl-2-(9Z,12Z)-octadecadienoyl-sn-glycero-3-phosphoethanolamine + CoA. The enzyme catalyses 1-(10Z-heptadecenoyl)-sn-glycero-3-phosphoethanolamine + (9Z,12Z)-octadecadienoyl-CoA = 1-(10Z-heptadecenoyl)-2-(9Z,12Z-octadecadienoyl)-sn-glycero-3-phosphoethanolamine + CoA. The catalysed reaction is a 1-acyl-sn-glycero-3-phosphoethanolamine + (5Z,8Z,11Z,14Z)-eicosatetraenoyl-CoA = 1-acyl-2-(5Z,8Z,11Z,14Z)-eicosatetraenoyl-sn-glycero-3-phosphoethanolamine + CoA. It catalyses the reaction 1-hexadecanoyl-sn-glycero-3-phosphoethanolamine + (5Z,8Z,11Z,14Z)-eicosatetraenoyl-CoA = 1-hexadecanoyl-2-(5Z,8Z,11Z,14Z-eicosatetraenoyl)-sn-glycero-3-phosphoethanolamine + CoA. It carries out the reaction 1-(9Z-octadecenoyl)-sn-glycero-3-phosphoethanolamine + (5Z,8Z,11Z,14Z)-eicosatetraenoyl-CoA = 1-(9Z)-octadecenoyl-2-(5Z,8Z,11Z,14Z)-eicosatetraenoyl-sn-glycero-3-phosphoethanolamine + CoA. The enzyme catalyses 1-(10Z-heptadecenoyl)-sn-glycero-3-phosphoethanolamine + (5Z,8Z,11Z,14Z)-eicosatetraenoyl-CoA = 1-(10Z-heptadecenoyl)-2-(5Z,8Z,11Z,14Z-eicosatetraenoyl)-sn-glycero-3-phosphoethanolamine + CoA. The catalysed reaction is a 1-O-(1Z-alkenyl)-sn-glycero-3-phosphoethanolamine + (5Z,8Z,11Z,14Z)-eicosatetraenoyl-CoA = 1-O-(1Z)-alkenyl-2-(5Z,8Z,11Z,14Z)-eicosatetraenoyl-sn-glycero-3-phosphoethanolamine + CoA. It catalyses the reaction a 1-acyl-sn-glycero-3-phospho-L-serine + (9Z,12Z)-octadecadienoyl-CoA = 1-acyl-2-(9Z,12Z-octadecadienoyl)-sn-glycero-3-phospho-L-serine + CoA. It carries out the reaction a 1-acyl-sn-glycero-3-phospho-L-serine + (5Z,8Z,11Z,14Z)-eicosatetraenoyl-CoA = 1-acyl-2-(5Z,8Z,11Z,14Z-eicosatetraenoyl)-sn-glycero-3-phospho-L-serine + CoA. The enzyme catalyses 1-hexadecanoyl-sn-glycero-3-phospho-L-serine + (9Z)-octadecenoyl-CoA = 1-hexadecanoyl-2-(9Z-octadecenoyl)-sn-glycero-3-phospho-L-serine + CoA. The catalysed reaction is 1-(9Z-octadecenoyl)-sn-glycero-3-phospho-L-serine + (9Z)-octadecenoyl-CoA = 1,2-di-(9Z)-octadecenoyl-sn-glycero-3-phospho-L-serine + CoA. It catalyses the reaction 1-hexadecanoyl-sn-glycero-3-phospho-L-serine + (9Z,12Z)-octadecadienoyl-CoA = 1-hexadecanoyl-2-(9Z,12Z-octadecadienoyl)-sn-glycero-3-phospho-L-serine + CoA. It carries out the reaction 1-(9Z-octadecenoyl)-sn-glycero-3-phospho-L-serine + (9Z,12Z)-octadecadienoyl-CoA = 1-(9Z-octadecenoyl)-2-(9Z,12Z-octadienoyl)-sn-glycero-3-phospho-L-serine + CoA. The enzyme catalyses 1-hexadecanoyl-sn-glycero-3-phospho-L-serine + (5Z,8Z,11Z,14Z)-eicosatetraenoyl-CoA = 1-hexadecanoyl-2-(5Z,8Z,11Z,14Z-eicosatetraenoyl)-sn-glycero-3-phospho-L-serine + CoA. The catalysed reaction is 1-(9Z-octadecenoyl)-sn-glycero-3-phospho-L-serine + (5Z,8Z,11Z,14Z)-eicosatetraenoyl-CoA = 1-(9Z-octadecenoyl)-2-(5Z,8Z,11Z,14Z-eicosatetraenoyl)-sn-glycero-3-phospho-L-serine + CoA. It functions in the pathway lipid metabolism; phospholipid metabolism. In terms of biological role, lysophospholipid O-acyltransferase (LPLAT) that catalyzes the reacylation step of the phospholipid remodeling process also known as the Lands cycle. Catalyzes transfer of the fatty acyl chain from fatty acyl-CoA to 1-acyl lysophospholipid to form various classes of phospholipids. Converts 1-acyl lysophosphatidylcholine (LPC) into phosphatidylcholine (PC) (LPCAT activity), 1-acyl lysophosphatidylserine (LPS) into phosphatidylserine (PS) (LPSAT activity) and 1-acyl lysophosphatidylethanolamine (LPE) into phosphatidylethanolamine (PE) (LPEAT activity). Favors polyunsaturated fatty acyl-CoAs as acyl donors compared to saturated fatty acyl-CoAs. Has higher activity for LPC acyl acceptors compared to LPEs and LPSs. Can also transfer the fatty acyl chain from fatty acyl-CoA to 1-O-alkyl lysophospholipid or 1-O-alkenyl lysophospholipid with lower efficiency. Acts as a major LPC O-acyltransferase in liver and intestine. As a component of the liver X receptor/NR1H3 or NR1H2 signaling pathway, mainly catalyzes the incorporation of arachidonate into PCs of endoplasmic reticulum (ER) membranes, increasing membrane dynamics and enabling triacylglycerols transfer to nascent very low-density lipoprotein (VLDL) particles. Promotes processing of sterol regulatory protein SREBF1 in hepatocytes, likely by facilitating the translocation of SREBF1-SCAP complex from ER to the Golgi apparatus. Participates in mechanisms by which the liver X receptor/NR1H3 or NR1H2 signaling pathway counteracts lipid-induced ER stress response and inflammation. Down-regulates hepatic inflammation by limiting arachidonic acid availability for synthesis of inflammatory eicosanoids, such as prostaglandins. In enterocytes, acts as a component of a gut-brain feedback loop that coordinates dietary lipid absorption and food intake. Regulates the abundance of PCs containing linoleate and arachidonate in enterocyte membranes, enabling passive diffusion of fatty acids and cholesterol across the membrane for efficient chylomicron assembly. In the intestinal crypt, acts as a component of dietary-responsive phospholipid-cholesterol axis, regulating the biosynthesis of cholesterol and its mitogenic effects on intestinal stem cells. The protein is Lysophospholipid acyltransferase 5 (Lpcat3) of Rattus norvegicus (Rat).